The chain runs to 230 residues: Large ribosomal subunit protein uL1 (230 aa).

The protein belongs to the universal ribosomal protein uL1 family. As to quaternary structure, part of the 50S ribosomal subunit.

Binds directly to 23S rRNA. The L1 stalk is quite mobile in the ribosome, and is involved in E site tRNA release. Functionally, protein L1 is also a translational repressor protein, it controls the translation of the L11 operon by binding to its mRNA. The sequence is that of Large ribosomal subunit protein uL1 from Acidiphilium cryptum (strain JF-5).